The primary structure comprises 495 residues: 3-octaprenyl-4-hydroxybenzoate carboxy-lyase (495 aa).

Asn172 is a Mn(2+) binding site. Prenylated FMN is bound by residues 175 to 177 (IYR), 189 to 191 (RWL), and 194 to 195 (RG). Position 238 (Glu238) interacts with Mn(2+). Catalysis depends on Asp287, which acts as the Proton donor.

The protein belongs to the UbiD family. As to quaternary structure, homohexamer. It depends on prenylated FMN as a cofactor. Requires Mn(2+) as cofactor.

It localises to the cell membrane. It catalyses the reaction a 4-hydroxy-3-(all-trans-polyprenyl)benzoate + H(+) = a 2-(all-trans-polyprenyl)phenol + CO2. Its pathway is cofactor biosynthesis; ubiquinone biosynthesis. Catalyzes the decarboxylation of 3-octaprenyl-4-hydroxy benzoate to 2-octaprenylphenol, an intermediate step in ubiquinone biosynthesis. The sequence is that of 3-octaprenyl-4-hydroxybenzoate carboxy-lyase from Yersinia pestis bv. Antiqua (strain Angola).